A 360-amino-acid chain; its full sequence is Membrane-bound lytic murein transglycosylase C (360 aa).

Residues 1–16 form the signal peptide; that stretch reads MKKLLALAVIAPLLIS. The N-palmitoyl cysteine moiety is linked to residue cysteine 17. A lipid anchor (S-diacylglycerol cysteine) is attached at cysteine 17.

Belongs to the transglycosylase Slt family.

It is found in the cell outer membrane. The catalysed reaction is Exolytic cleavage of the (1-&gt;4)-beta-glycosidic linkage between N-acetylmuramic acid (MurNAc) and N-acetylglucosamine (GlcNAc) residues in peptidoglycan, from either the reducing or the non-reducing ends of the peptidoglycan chains, with concomitant formation of a 1,6-anhydrobond in the MurNAc residue.. Murein-degrading enzyme. May play a role in recycling of muropeptides during cell elongation and/or cell division. The protein is Membrane-bound lytic murein transglycosylase C of Salmonella typhi.